A 160-amino-acid polypeptide reads, in one-letter code: MKSLQKGFTLIELMIVVAIIGILAAFAIPAYNDYIARSQAAEGVSLADGLKVRIAENLQDGECKGPDANTASGVVGNEDKGKYGLAKIDGEYDASKTEAGDPNGCKVEITYGQGTAGDKISKLITGKKLVLDQLVNGSFIAGDGTDLADKFIPNAVKAKK.

Residues 1–7 constitute a propeptide, leader sequence; it reads MKSLQKG. An N-methylphenylalanine modification is found at Phe8. The helical transmembrane segment at 8-28 threads the bilayer; the sequence is FTLIELMIVVAIIGILAAFAI. A disulfide bridge links Cys63 with Cys105.

The protein belongs to the N-Me-Phe pilin family. In terms of assembly, the pili are polar flexible filaments of about 5.4 nanometers diameter and 2.5 micrometers average length; they consist of only a single polypeptide chain arranged in a helical configuration of five subunits per turn in the assembled pilus.

The protein localises to the fimbrium. It is found in the membrane. Its function is as follows. Major component of the type IV fimbriae that plays an essential role in twitching motility, natural transformation, and protease secretion. The polypeptide is Type IV major fimbrial protein FimA (fimA) (Dichelobacter nodosus (Bacteroides nodosus)).